Here is a 131-residue protein sequence, read N- to C-terminus: Cytochrome b5 (131 aa).

Residues 3–79 enclose the Cytochrome b5 heme-binding domain; it reads AKIFSLDEVS…LEEYLIGSLD (77 aa). Heme is bound by residues histidine 38 and histidine 62. A helical membrane pass occupies residues 108–125; it reads IILPALAIIGALVYKYVI.

It belongs to the cytochrome b5 family.

Its subcellular location is the endoplasmic reticulum membrane. The protein resides in the microsome membrane. Membrane bound hemoprotein which function as an electron carrier for several membrane bound oxygenases. This chain is Cytochrome b5, found in Rhizopus stolonifer (Rhizopus nigricans).